An 878-amino-acid polypeptide reads, in one-letter code: Phosphoenolpyruvate carboxylase (878 aa).

Residues H137 and K545 contribute to the active site.

The protein belongs to the PEPCase type 1 family. The cofactor is Mg(2+).

The enzyme catalyses oxaloacetate + phosphate = phosphoenolpyruvate + hydrogencarbonate. In terms of biological role, forms oxaloacetate, a four-carbon dicarboxylic acid source for the tricarboxylic acid cycle. In Photorhabdus laumondii subsp. laumondii (strain DSM 15139 / CIP 105565 / TT01) (Photorhabdus luminescens subsp. laumondii), this protein is Phosphoenolpyruvate carboxylase.